A 1046-amino-acid chain; its full sequence is SWI/SNF-related matrix-associated actin-dependent regulator of chromatin subfamily A member 1 (1046 aa).

Residues 27–61 (EQPGPSTFKEEGAAAAATEGTTATEKGEKKEKITS) form a disordered region. Positions 39 to 50 (AAAAATEGTTAT) are enriched in low complexity. A phosphoserine mark is found at Ser-120 and Ser-123. The region spanning 199–364 (ISLYENGVNG…WALLNFLLPD (166 aa)) is the Helicase ATP-binding domain. 212–219 (DEMGLGKT) contributes to the ATP binding site. The DEAH box motif lies at 315–318 (DEAH). The 152-residue stretch at 494-645 (ALDKLLARIK…SIVIQQGRLI (152 aa)) folds into the Helicase C-terminal domain. Glycyl lysine isopeptide (Lys-Gly) (interchain with G-Cter in SUMO2) cross-links involve residues Lys-654, Lys-720, and Lys-742. A disordered region spans residues 819–840 (AQREEQKKIDGAEPLTPQETEE). Residues 820 to 829 (QREEQKKIDG) show a composition bias toward basic and acidic residues. In terms of domain architecture, SANT 1 spans 847–899 (QGFTNWTKRDFNQFIKANEKYGRDDIDNIAREVEGKSPEEVMEYSAVFWERCN). Tyr-946 bears the Phosphotyrosine mark. Positions 950–1014 (KGKNYTEEED…QRRCNTLISL (65 aa)) constitute an SANT 2 domain. Residues 1003 to 1037 (EFQRRCNTLISLIEKENMEIEERERAEKKKRATKT) adopt a coiled-coil conformation. The segment at 1025–1046 (RERAEKKKRATKTPMVKFSAFS) is disordered.

The protein belongs to the SNF2/RAD54 helicase family. ISWI subfamily. In terms of assembly, may form homodimers. Component of the ACF-1 ISWI chromatin remodeling complex at least composed of SMARCA1 and BAZ1A, which regulates the spacing of histone octamers on the DNA template to facilitate access to DNA. Within the complex interacts with BAZ1A; the interaction is direct. Component of the WICH-1 ISWI chromatin remodeling complex at least composed of SMARCA1 and BAZ1B/WSTF. Within the complex interacts with BAZ1B/WSTF. Component of the NoRC-1 ISWI chromatin remodeling complex at least composed of SMARCA1 and BAZ2A/TIP5. Within the complex interacts with BAZ2A/TIP5. Component of the BRF-1 ISWI chromatin remodeling complex at least composed of SMARCA1 and BAZ2B. Within the complex interacts with BAZ2B. Component of the NURF-1 ISWI chromatin remodeling complex (also called the nucleosome-remodeling factor (NURF) complex) at least composed of SMARCA1, BPTF, RBBP4 and RBBP7. Within the complex interacts with BPTF. Within the complex interacts with RBBP4 and RBBP7. Component of the CERF-1 ISWI chromatin remodeling complex (also called the CECR2-containing-remodeling factor (CERF) complex) at least composed of CECR2 and SMARCA1. LUZP1 is detected as part of the CERF-1 complex in embryonic stem cells where it is involved in complex stabilization but is not detected in the complex in the testis. Component of the RSF-1 ISWI chromatin remodeling complex at least composed of SMARCA1 and RSF1. Within the complex interacts with RSF1. Interacts with PRLR. Interacts with ERCC6. In terms of tissue distribution, predominantly expressed in cortex, cerebellum, ovaries, testes, uterus and placenta.

Its subcellular location is the nucleus. The enzyme catalyses ATP + H2O = ADP + phosphate + H(+). ATPase that possesses intrinsic ATP-dependent chromatin-remodeling activity. ATPase activity is substrate-dependent, and is increased when nucleosomes are the substrate, but is also catalytically active when DNA alone is the substrate. Catalytic subunit of ISWI chromatin-remodeling complexes, which form ordered nucleosome arrays on chromatin and facilitate access to DNA during DNA-templated processes such as DNA replication, transcription, and repair. Within the ISWI chromatin-remodeling complexes, slides edge- and center-positioned histone octamers away from their original location on the DNA template. Catalytic activity and histone octamer sliding propensity is regulated and determined by components of the ISWI chromatin-remodeling complexes. The BAZ1A-, BAZ1B-, BAZ2A- and BAZ2B-containing ISWI chromatin-remodeling complexes regulate the spacing of nucleosomes along the chromatin and have the ability to slide mononucleosomes to the center of a DNA template. The CECR2- and RSF1-containing ISWI chromatin-remodeling complexes do not have the ability to slide mononucleosomes to the center of a DNA template. Within the NURF-1 and CERF-1 ISWI chromatin remodeling complexes, nucleosomes are the preferred substrate for its ATPase activity. Within the NURF-1 ISWI chromatin-remodeling complex, binds to the promoters of En1 and En2 to positively regulate their expression and promote brain development. May promote neurite outgrowth. May be involved in the development of luteal cells. Facilitates nucleosome assembly during DNA replication, ensuring replication fork progression and genomic stability by preventing replication stress and nascent DNA gaps. The polypeptide is SWI/SNF-related matrix-associated actin-dependent regulator of chromatin subfamily A member 1 (Smarca1) (Mus musculus (Mouse)).